A 313-amino-acid polypeptide reads, in one-letter code: Interferon-inducible double-stranded RNA-dependent protein kinase activator A (313 aa).

Residues 1–21 are disordered; the sequence is MSQSRHRAAAPPMEREDSGTF. Sufficient for self-association and interaction with TARBP2 regions lie at residues 1–103, 102–195, and 195–313; these read MSQS…KANA, NASI…FSNI, and ISPE…AERK. Residue S18 is modified to Phosphoserine. DRBM domains are found at residues 34 to 101, 126 to 194, and 240 to 308; these read TPIQ…ILKA, NPIG…KFSN, and DYIQ…YLKI. 3 positions are modified to phosphoserine: S167, S246, and S287.

Belongs to the PRKRA family. Homodimer. Interacts with EIF2AK2/PKR through its DRBM domains. Interacts with DICER1, AGO2 and TARBP2. Also able to interact with dsRNA. Interacts with UBC9. Forms a complex with UBC9 and p53/TP53. Interacts with DUS2L (via DRBM domain). Phosphorylated at Ser-246 in unstressed cells and at Ser-287 in stressed cells. Phosphorylation at Ser-246 appears to be a prerequisite for subsequent phosphorylation at Ser-287. Phosphorylation at Ser-246 and Ser-287 are necessary for activation of EIF2AK2/PKR under conditions of stress.

It localises to the cytoplasm. Its subcellular location is the perinuclear region. In terms of biological role, activates EIF2AK2/PKR in the absence of double-stranded RNA (dsRNA), leading to phosphorylation of EIF2S1/EFI2-alpha and inhibition of translation and induction of apoptosis. Required for siRNA production by DICER1 and for subsequent siRNA-mediated post-transcriptional gene silencing. Does not seem to be required for processing of pre-miRNA to miRNA by DICER1. Promotes UBC9-p53/TP53 association and sumoylation and phosphorylation of p53/TP53 at 'Lys-386' at 'Ser-392' respectively and enhances its activity in a EIF2AK2/PKR-dependent manner. This chain is Interferon-inducible double-stranded RNA-dependent protein kinase activator A (PRKRA), found in Bos taurus (Bovine).